A 152-amino-acid polypeptide reads, in one-letter code: Multiprotein-bridging factor 1 (152 aa).

Composition is skewed to polar residues over residues 1-11 (MSSDWDTNTVI) and 22-32 (PRQQVARTQGQ). The segment at 1 to 32 (MSSDWDTNTVIGQRVRTGGSGPRQQVARTQGQ) is disordered. The region spanning 86 to 140 (IAKGRGDKGMTQKDLATRINEKPTVINDYEAGRAIPNQQILAKMERALGVKLRGK) is the HTH cro/C1-type domain. The H-T-H motif DNA-binding region spans 97–116 (QKDLATRINEKPTVINDYEA).

The protein belongs to the MBF1 family.

Functionally, transcriptional coactivator that stimulates GCN4-dependent transcriptional activity by bridging the DNA-binding region of GCN4 and TBP (SPT15), thereby recruiting TBP to GCN4-bound promoters. Involved in induction of the ribosome quality control (RQC) pathway; a pathway that degrades nascent peptide chains during problematic translation. Required to prevent stalled ribosomes from frameshifting. In Eremothecium gossypii (strain ATCC 10895 / CBS 109.51 / FGSC 9923 / NRRL Y-1056) (Yeast), this protein is Multiprotein-bridging factor 1 (MBF1).